We begin with the raw amino-acid sequence, 607 residues long: Probable CoA ligase CCL8 (607 aa).

ATP-binding positions include 236–244, 391–396, Asp-474, 486–489, and Lys-591; these read TSGTTGKPK, ERYGMT, and ILGR. The interval 305–391 is SBD1; that stretch reads SVRGIWQRWR…QTITGHRLLE (87 aa). Positions 392-453 are SBD2; sequence RYGMTEFVMA…VRSPSLFKEY (62 aa).

This sequence belongs to the ATP-dependent AMP-binding enzyme family. Mostly expressed at low levels in glandular trichomes (lupulin glands) after flowering, and, to a lower extent, in stems, leaves, flowers and cones.

It is found in the cytoplasm. It localises to the cytosol. This is Probable CoA ligase CCL8 from Humulus lupulus (European hop).